We begin with the raw amino-acid sequence, 377 residues long: Spore coat protein SA (377 aa).

It belongs to the glycosyltransferase group 1 family. Glycosyltransferase 4 subfamily.

This Bacillus subtilis (strain 168) protein is Spore coat protein SA (cotSA).